Reading from the N-terminus, the 411-residue chain is SH3 and cysteine-rich domain-containing protein 2 (411 aa).

A disordered region spans residues Met-1 to Thr-29. Residues Pro-19–Thr-29 show a composition bias toward polar residues. Phosphoserine is present on Ser-48. Positions Thr-64–Pro-95 are disordered. Positions Pro-70 to Thr-82 are enriched in pro residues. A Phorbol-ester/DAG-type zinc finger spans residues Leu-110–Cys-161. Disordered stretches follow at residues Ser-174–Pro-203 and Arg-219–Arg-288. The span at Arg-219 to Ser-232 shows a compositional bias: low complexity. SH3 domains are found at residues Gly-292–Pro-351 and Asn-354–Ile-411.

As to quaternary structure, interacts (via SH3 domains) with CACNA1S. Interacts (via SH3 domains) with CACNA1C. Has much lower affinity for CACNA1C than for CACNA1S.

The protein localises to the cytoplasm. It is found in the cytosol. Its subcellular location is the cell membrane. The protein resides in the sarcolemma. Functionally, plays a redundant role in promoting the expression of calcium channel CACNA1S at the cell membrane, and thereby contributes to increased channel activity. Slows down the inactivation rate of the calcium channel CACNA1C. The polypeptide is SH3 and cysteine-rich domain-containing protein 2 (STAC2) (Homo sapiens (Human)).